Reading from the N-terminus, the 352-residue chain is MTSFDALLVAGFGGPESMAEVPDFLQRVSGGHIPPDRLAEVEHHYARFGGVSPVNAQHRALAAALGEALVARGIDVPIANANRHSMPYMDQALADLQSRGIRRVLTLVPTPYASYSGCRAYREELLAGTRIDDEGRPALQVVKLDPYADLPALVTAQVQLLRAALADHPDAHLVFTTHSIPTAMAETSGPHGNAYIPQHLALIDAVMAELAALGLRPSWELAYQSRSGSPRTPWLEPDINDVITRLAGEGVRDVICSPIGFLTDHMEVVWDLDTEAAATAAEHSMAFTRVATVGTLPVFIEGLADLIVAALSTKPGTGPDAPAARHWCTPDCCPNARIAGRPTIPGFAAGPR.

Fe-coproporphyrin III contacts are provided by serine 52 and tyrosine 121. Histidine 178 and glutamate 267 together coordinate Fe(2+).

The protein belongs to the ferrochelatase family.

It is found in the cytoplasm. It catalyses the reaction Fe-coproporphyrin III + 2 H(+) = coproporphyrin III + Fe(2+). The protein operates within porphyrin-containing compound metabolism; protoheme biosynthesis. In terms of biological role, involved in coproporphyrin-dependent heme b biosynthesis. Catalyzes the insertion of ferrous iron into coproporphyrin III to form Fe-coproporphyrin III. This is Coproporphyrin III ferrochelatase from Propionibacterium freudenreichii subsp. freudenreichii.